The primary structure comprises 379 residues: Putative glutamate--cysteine ligase 2 (379 aa).

This sequence belongs to the glutamate--cysteine ligase type 2 family. YbdK subfamily.

The enzyme catalyses L-cysteine + L-glutamate + ATP = gamma-L-glutamyl-L-cysteine + ADP + phosphate + H(+). ATP-dependent carboxylate-amine ligase which exhibits weak glutamate--cysteine ligase activity. The chain is Putative glutamate--cysteine ligase 2 from Roseiflexus castenholzii (strain DSM 13941 / HLO8).